A 270-amino-acid polypeptide reads, in one-letter code: Phospholysine phosphohistidine inorganic pyrophosphate phosphatase (270 aa).

Mg(2+)-binding residues include Asp17 and Ser19. Substrate is bound by residues 17–19 (DIS), 54–55 (TN), and Lys189. Asp214 serves as a coordination point for Mg(2+).

The protein belongs to the HAD-like hydrolase superfamily. As to quaternary structure, homodimer. Mg(2+) is required as a cofactor.

It is found in the cytoplasm. The protein localises to the nucleus. It catalyses the reaction diphosphate + H2O = 2 phosphate + H(+). Phosphatase that hydrolyzes imidodiphosphate, 3-phosphohistidine and 6-phospholysine. Has broad substrate specificity and can also hydrolyze inorganic diphosphate, but with lower efficiency. The polypeptide is Phospholysine phosphohistidine inorganic pyrophosphate phosphatase (Lhpp) (Rattus norvegicus (Rat)).